The chain runs to 143 residues: Transmembrane protein 207 (143 aa).

A signal peptide spans 1–29 (MSTSSPFRVASKIVTAGCLCLPLFQRVLS). The helical transmembrane segment at 52-72 (IWFFLLIFLVVLLCGVVLFCL) threads the bilayer.

Interacts with WWOX.

Its subcellular location is the membrane. The chain is Transmembrane protein 207 from Mus musculus (Mouse).